Consider the following 152-residue polypeptide: UPF0178 protein YE1167 (152 aa).

It belongs to the UPF0178 family.

The chain is UPF0178 protein YE1167 from Yersinia enterocolitica serotype O:8 / biotype 1B (strain NCTC 13174 / 8081).